The primary structure comprises 332 residues: Eukaryotic translation initiation factor 3 subunit I (332 aa).

WD repeat units follow at residues 8–47, 48–87, 144–182, and 279–318; these read GHER…GTYH, GHQG…LLHT, DESK…LLSS, and GHFG…FDFM.

It belongs to the eIF-3 subunit I family. As to quaternary structure, component of the eukaryotic translation initiation factor 3 (eIF-3) complex.

The protein resides in the cytoplasm. Component of the eukaryotic translation initiation factor 3 (eIF-3) complex, which is involved in protein synthesis of a specialized repertoire of mRNAs and, together with other initiation factors, stimulates binding of mRNA and methionyl-tRNAi to the 40S ribosome. The eIF-3 complex specifically targets and initiates translation of a subset of mRNAs involved in cell proliferation. The sequence is that of Eukaryotic translation initiation factor 3 subunit I from Phaeosphaeria nodorum (strain SN15 / ATCC MYA-4574 / FGSC 10173) (Glume blotch fungus).